Here is a 332-residue protein sequence, read N- to C-terminus: dTDP-3,4-didehydro-2,6-dideoxy-alpha-D-glucose 3-reductase (332 aa).

17–23 serves as a coordination point for NADP(+); the sequence is CADIAWR. Arg24 is a substrate binding site. NADP(+)-binding positions include 42 to 43, Tyr63, Leu79, and His84; that span reads SR. Residue Lys102 is the Proton donor of the active site. NADP(+)-binding residues include Arg170 and Asp182. Residues Tyr240 and Thr260 each contribute to the substrate site.

It belongs to the Gfo/Idh/MocA family. As to quaternary structure, homotetramer; dimer of dimers.

The enzyme catalyses dTDP-4-dehydro-2,6-dideoxy-alpha-D-glucose + NADP(+) = dTDP-3,4-didehydro-2,6-dideoxy-alpha-D-glucose + NADPH + H(+). Its pathway is antibiotic biosynthesis. Its function is as follows. Involved in the biosynthesis of L-digitoxose, an unusual dideoxysugar attached to various pharmacologically active natural products, including the antitumor antibiotic tetrocarcin A, and the antibiotics kijanimicin and jadomycin B. Catalyzes the reduction of the C-3 keto moiety of dTDP-3,4-diketo-2,6-dideoxy-alpha-D-glucose to yield dTDP-4-keto-2,6-dideoxy-alpha-D-glucose. Also able to reduce dTDP-3-keto-6-deoxy-D-galactose and dTDP-3-keto-6-deoxy-D-glucose to yield dTDP-fucose and dTDP-quinovose, respectively. In Actinomadura kijaniata, this protein is dTDP-3,4-didehydro-2,6-dideoxy-alpha-D-glucose 3-reductase.